The following is a 278-amino-acid chain: Ras-related protein rapC (278 aa).

10–17 (GASGTGKT) contacts GTP. Positions 32 to 40 (YDPTIEDLY) match the Effector region motif. Residues 58–62 (DTSGT) and 119–122 (NKCD) contribute to the GTP site. 2 disordered regions span residues 176 to 209 (NGSS…SSSS) and 236 to 278 (STSS…CLIM). Low complexity-rich tracts occupy residues 198 to 209 (GSNNSSINSSSS) and 236 to 251 (STSS…SQTN). The residue at position 275 (cysteine 275) is a Cysteine methyl ester. Cysteine 275 carries S-geranylgeranyl cysteine lipidation. Positions 276–278 (LIM) are cleaved as a propeptide — removed in mature form.

This sequence belongs to the small GTPase superfamily. Ras family.

The protein resides in the cell membrane. The catalysed reaction is GTP + H2O = GDP + phosphate + H(+). This Dictyostelium discoideum (Social amoeba) protein is Ras-related protein rapC (rapC).